The following is a 1794-amino-acid chain: Protein TIC 214 (1794 aa).

A run of 6 helical transmembrane segments spans residues 23-43, 64-84, 87-107, 124-144, 172-192, and 218-238; these read VVVGLYYGFITTFSIGPSYLF, FIMGQFMMLISIYYTPLHLAL, PHTITVLVLPYLLFHFFWNNH, LSIQCVFLNNLIFQLFNHFIL, VGWLIGHILFMKWVGLVLFWI, and ILSILLFITCVYYLGRIPSPI. A disordered region spans residues 244-307; the sequence is KETSETGETE…REGVNGKEKT (64 aa). Acidic residues predominate over residues 248-258; that stretch reads ETGETEEETDV. Composition is skewed to basic and acidic residues over residues 259-276 and 286-307; these read EIERTSETKGTEQEKEGS and SEEKGDPDKIDEREGVNGKEKT.

Belongs to the TIC214 family. Part of the Tic complex.

The protein resides in the plastid. Its subcellular location is the chloroplast inner membrane. Its function is as follows. Involved in protein precursor import into chloroplasts. May be part of an intermediate translocation complex acting as a protein-conducting channel at the inner envelope. This chain is Protein TIC 214, found in Amborella trichopoda.